Reading from the N-terminus, the 96-residue chain is Pro-glucagon (96 aa).

Composition is skewed to basic and acidic residues over residues 1-12 and 19-30; these read LQDAEDSSRFDA and EARELSTPKXHS. The disordered stretch occupies residues 1–35; it reads LQDAEDSSRFDADDTLAGEARELSTPKXHSEGTFS.

This sequence belongs to the glucagon family.

It localises to the secreted. In terms of biological role, plays a key role in glucose metabolism and homeostasis. Regulates blood glucose by increasing gluconeogenesis and decreasing glycolysis. The protein is Pro-glucagon (gcg) of Myoxocephalus scorpius (Shorthorn sculpin).